A 236-amino-acid polypeptide reads, in one-letter code: OPEP-2 protein (236 aa).

The protein is OPEP-2 protein (OPEP-2) of Orgyia pseudotsugata (Douglas-fir tussock moth).